The sequence spans 496 residues: uncharacterized protein (496 aa).

Helical transmembrane passes span Leu-5–Ala-25, Phe-45–Leu-65, Val-77–Pro-97, Leu-127–Ile-147, Val-161–Ile-181, Ile-193–Gly-213, Ile-239–Ala-259, Phe-278–Leu-298, Phe-325–Ala-345, Met-374–Val-394, Leu-396–Phe-416, Ala-424–Ser-444, and Glu-450–Val-470.

The protein belongs to the sodium:solute symporter (SSF) (TC 2.A.21) family.

The protein localises to the cell membrane. This is an uncharacterized protein from Bacillus subtilis (strain 168).